Reading from the N-terminus, the 259-residue chain is Hydroxyacylglutathione hydrolase (259 aa).

Residues H56, H58, D60, H61, H112, D133, and H171 each contribute to the Zn(2+) site. The interval 220–243 (NPFLRTGETSVKEKADERSDAQNT) is disordered. A compositionally biased stretch (basic and acidic residues) spans 229–239 (SVKEKADERSD).

The protein belongs to the metallo-beta-lactamase superfamily. Glyoxalase II family. In terms of assembly, monomer. It depends on Zn(2+) as a cofactor.

It catalyses the reaction an S-(2-hydroxyacyl)glutathione + H2O = a 2-hydroxy carboxylate + glutathione + H(+). Its pathway is secondary metabolite metabolism; methylglyoxal degradation; (R)-lactate from methylglyoxal: step 2/2. Functionally, thiolesterase that catalyzes the hydrolysis of S-D-lactoyl-glutathione to form glutathione and D-lactic acid. In Pseudomonas syringae pv. syringae (strain B728a), this protein is Hydroxyacylglutathione hydrolase.